We begin with the raw amino-acid sequence, 270 residues long: Ribosomal RNA small subunit methyltransferase A (270 aa).

Residues Asn15, Ile17, Gly42, Glu64, Asp89, and Asn108 each coordinate S-adenosyl-L-methionine.

The protein belongs to the class I-like SAM-binding methyltransferase superfamily. rRNA adenine N(6)-methyltransferase family. RsmA subfamily.

The protein resides in the cytoplasm. It carries out the reaction adenosine(1518)/adenosine(1519) in 16S rRNA + 4 S-adenosyl-L-methionine = N(6)-dimethyladenosine(1518)/N(6)-dimethyladenosine(1519) in 16S rRNA + 4 S-adenosyl-L-homocysteine + 4 H(+). In terms of biological role, specifically dimethylates two adjacent adenosines (A1518 and A1519) in the loop of a conserved hairpin near the 3'-end of 16S rRNA in the 30S particle. May play a critical role in biogenesis of 30S subunits. The protein is Ribosomal RNA small subunit methyltransferase A of Anaplasma marginale (strain Florida).